The primary structure comprises 340 residues: MFSSLYPLVRAQLFRMDAEDAHHLTLRILGAAGRTGLAGALAPRVPDAPRTVMGLTFRNPVGLAAGLDKDGACIDGLAALGFGFIEVGTVTPRAQPGNPRPRMFRLPQANAVINRMGFNNAGVDQFVKNVQAARYRGILGLNIGKNADTPIERAAEDYLYCLDRVYPFASYVTVNISSPNTKNLRQLQGAGELDALLAALKDKQQRLADMHGKLVPLALKIAPDLDDEQIKSIADTLLRHRFEGVIATNTTLSRTAVAGMQYGDEAGGLSGKPVFDASNAVIRKLRAEVGETVPIIGVGGIFSGEDARAKMAAGASLVQLYTGFIYRGPALVAECVQALR.

FMN-binding positions include 65 to 69 (AGLDK) and threonine 89. Residue lysine 69 participates in substrate binding. Substrate is bound at residue 114-118 (NRMGF). The FMN site is built by asparagine 142 and asparagine 175. Position 175 (asparagine 175) interacts with substrate. Residue serine 178 is the Nucleophile of the active site. Substrate is bound at residue asparagine 180. FMN-binding residues include lysine 220 and threonine 248. Residue 249 to 250 (NT) participates in substrate binding. Residues glycine 271, glycine 300, and 321-322 (YT) contribute to the FMN site.

This sequence belongs to the dihydroorotate dehydrogenase family. Type 2 subfamily. Monomer. Requires FMN as cofactor.

Its subcellular location is the cell membrane. It carries out the reaction (S)-dihydroorotate + a quinone = orotate + a quinol. Its pathway is pyrimidine metabolism; UMP biosynthesis via de novo pathway; orotate from (S)-dihydroorotate (quinone route): step 1/1. Functionally, catalyzes the conversion of dihydroorotate to orotate with quinone as electron acceptor. The sequence is that of Dihydroorotate dehydrogenase (quinone) from Paraburkholderia xenovorans (strain LB400).